Here is a 259-residue protein sequence, read N- to C-terminus: Polycomb group RING finger protein 1 (259 aa).

Residue Ala2 is modified to N-acetylalanine. The residue at position 3 (Ser3) is a Phosphoserine. Residue Lys24 forms a Glycyl lysine isopeptide (Lys-Gly) (interchain with G-Cter in SUMO2) linkage. The RING-type zinc-finger motif lies at 47–86; the sequence is CCLCAGYFVDATTITECLHTFCKSCIVKYLQTSKYCPMCN. Residues 86–247 are necessary for repressor activity; sequence NIKIHETQPL…LSHWFGKPSP (162 aa). Residue Lys88 forms a Glycyl lysine isopeptide (Lys-Gly) (interchain with G-Cter in SUMO2) linkage. A required for the interaction with the KDM2B-SKP1 heterodimeric complex region spans residues 150–255; it reads LPFSSFDHSK…SPLLLQYSVK (106 aa). Positions 167-255 are RING-finger and WD40-associated ubiquitin-like domain (RAWUL); sufficient for interaction with BCOR and BCORL1; sequence EQLSLCLERL…SPLLLQYSVK (89 aa).

Interacts with BCORL1, forming heterodimers. The PCGF1-BCORL1 heterodimeric complex interacts with the KDM2B-SKP1 heterodimeric complex to form a homotetrameric polycomb repression complex 1 (PRC1.1). Component of the repressive BCOR complex containing a Polycomb group subcomplex at least composed of RYBP, RING1 and RNF2/RING2. Specifically interacts with BCOR, RING1 and RNF2/RING2. Component of a PRC1-like complex. Interacts with CBX6, CBX7 and CBX8. Interacts with DPPA4, NANOG, POU5F1 and RYBP.

It is found in the nucleus. Its function is as follows. Component of the Polycomb group (PcG) multiprotein BCOR complex, a complex required to maintain the transcriptionally repressive state of some genes, such as BCL6 and the cyclin-dependent kinase inhibitor, CDKN1A. Transcriptional repressor that may be targeted to the DNA by BCL6; this transcription repressor activity may be related to PKC signaling pathway. Represses CDKN1A expression by binding to its promoter, and this repression is dependent on the retinoic acid response element (RARE element). Promotes cell cycle progression and enhances cell proliferation as well. May have a positive role in tumor cell growth by down-regulating CDKN1A. Component of a Polycomb group (PcG) multiprotein PRC1-like complex, a complex class required to maintain the transcriptionally repressive state of many genes, including Hox genes, throughout development. PcG PRC1 complex acts via chromatin remodeling and modification of histones; it mediates monoubiquitination of histone H2A 'Lys-119', rendering chromatin heritably changed in its expressibility. Within the PRC1-like complex, regulates RNF2 ubiquitin ligase activity. Regulates the expression of DPPA4 and NANOG in the NT2 embryonic carcinoma cells. This is Polycomb group RING finger protein 1 (PCGF1) from Bos taurus (Bovine).